Consider the following 278-residue polypeptide: HTH-type transcriptional activator RhaS (278 aa).

Residues 174–272 form the HTH araC/xylS-type domain; that stretch reads NLLLAWLEDH…NWSPRDIRQG (99 aa). DNA-binding regions (H-T-H motif) lie at residues 191 to 212 and 239 to 262; these read DAVA…KQQT and VTDI…RREF.

As to quaternary structure, binds DNA as a dimer.

The protein resides in the cytoplasm. Functionally, activates expression of the rhaBAD and rhaT operons. This is HTH-type transcriptional activator RhaS from Escherichia coli O139:H28 (strain E24377A / ETEC).